The chain runs to 485 residues: Isocitrate dehydrogenase [NADP], chloroplastic/mitochondrial (485 aa).

The transit peptide at 1-65 (MLNKLTHGVF…VQFHRASAVR (65 aa)) directs the protein to the chloroplast and mitochondrion. NADP(+)-binding positions include 147–149 (TIT) and Arg-154. Thr-149 is a binding site for substrate. Residues 166–172 (SPNGTIR), Arg-181, and Arg-204 each bind substrate. Position 323 (Asp-323) interacts with Mn(2+). Position 331 (Lys-331) interacts with NADP(+). Asp-346 is a binding site for Mn(2+). NADP(+)-binding positions include 381-386 (GTVTRH) and Asn-399.

The protein belongs to the isocitrate and isopropylmalate dehydrogenases family. The cofactor is Mg(2+). Mn(2+) is required as a cofactor.

The protein resides in the plastid. The protein localises to the chloroplast. It is found in the mitochondrion. The enzyme catalyses D-threo-isocitrate + NADP(+) = 2-oxoglutarate + CO2 + NADPH. May be involved in response to oxidative stresses. The polypeptide is Isocitrate dehydrogenase [NADP], chloroplastic/mitochondrial (Arabidopsis thaliana (Mouse-ear cress)).